A 428-amino-acid polypeptide reads, in one-letter code: ETS domain-containing protein Elk-1 (428 aa).

The ETS DNA-binding region spans 5 to 86 (VTLWQFLLQL…SGQKFVYKFV (82 aa)). Disordered regions lie at residues 121-149 (AAPG…ARSS), 165-205 (QSLQ…SPLE), and 228-358 (NLKS…SLLP). Positions 177–205 (PAVVLPSAAPAGAAAPPSGSRSTSPSPLE) are enriched in low complexity. Residues lysine 230, lysine 249, and lysine 254 each participate in a glycyl lysine isopeptide (Lys-Gly) (interchain with G-Cter in SUMO) cross-link. The span at 248–261 (VKVEGPKEELEVAG) shows a compositional bias: basic and acidic residues. Position 324 is a phosphoserine; by MAPK1 (serine 324). 4 positions are modified to phosphothreonine; by MAPK1: threonine 336, threonine 353, threonine 363, and threonine 368. Positions 349 to 399 (GPALTPSLLPTHTLTPVLLTPSSLPPSIHFWSTLSPIAPRSPAKLSFQFPS) are sufficient for interaction with MAD2L2. O-linked (GlcNAc) threonine glycosylation is present at threonine 381. The residue at position 383 (serine 383) is a Phosphoserine; by MAPK1 and MAPK8. Serine 389 bears the Phosphoserine; by MAPK1 mark. Threonine 417 carries the post-translational modification Phosphothreonine; by MAPK1. Serine 422 bears the Phosphoserine; by MAPK1 mark.

Belongs to the ETS family. In terms of assembly, interacts in its sumoylated form with PIAS2/PIASX which enhances its transcriptional activator activity. Interacts with MAD2L2; the interaction is direct and promotes phosphorylation by the kinases MAPK8 and/or MAPK9. Interacts with POU1F1. Post-translationally, sumoylation represses transcriptional activator activity as it results in recruitment of HDAC2 to target gene promoters which leads to decreased histone acetylation and reduced transactivator activity. It also regulates nuclear retention. On mitogenic stimulation, phosphorylated on C-terminal serine and threonine residues by MAPK1. Ser-383 and Ser-389 are the preferred sites for MAPK1. In vitro, phosphorylation by MAPK1 potentiates ternary complex formation with the serum responses factors, SRE and SRF. Also phosphorylated on Ser-383 by MAPK8 and/or MAKP9. Phosphorylation leads to loss of sumoylation and restores transcriptional activator activity. Phosphorylated and activated by CAMK4, MAPK11, MAPK12 and MAPK14. Upon bFGF stimulus, phosphorylated by PAK1. Phosphorylated by PRP4K at Thr-417; phosphorylation activation ELK1 transcriptional activity. As to expression, lung and testis.

The protein localises to the nucleus. Functionally, transcription factor that binds to purine-rich DNA sequences. Forms a ternary complex with SRF and the ETS and SRF motifs of the serum response element (SRE) on the promoter region of immediate early genes such as FOS and IER2. Induces target gene transcription upon JNK and MAPK-signaling pathways stimulation. This Homo sapiens (Human) protein is ETS domain-containing protein Elk-1.